The following is a 413-amino-acid chain: Gamma-glutamyl phosphate reductase (413 aa).

Belongs to the gamma-glutamyl phosphate reductase family.

It localises to the cytoplasm. It catalyses the reaction L-glutamate 5-semialdehyde + phosphate + NADP(+) = L-glutamyl 5-phosphate + NADPH + H(+). Its pathway is amino-acid biosynthesis; L-proline biosynthesis; L-glutamate 5-semialdehyde from L-glutamate: step 2/2. Functionally, catalyzes the NADPH-dependent reduction of L-glutamate 5-phosphate into L-glutamate 5-semialdehyde and phosphate. The product spontaneously undergoes cyclization to form 1-pyrroline-5-carboxylate. The chain is Gamma-glutamyl phosphate reductase from Lactococcus lactis subsp. cremoris (strain SK11).